The following is a 174-amino-acid chain: Ribosome maturation factor RimM (174 aa).

A PRC barrel domain is found at 97-171 (SDGEYYWCDL…RMTVSLPEGL (75 aa)).

Belongs to the RimM family. Binds ribosomal protein uS19.

It is found in the cytoplasm. In terms of biological role, an accessory protein needed during the final step in the assembly of 30S ribosomal subunit, possibly for assembly of the head region. Essential for efficient processing of 16S rRNA. May be needed both before and after RbfA during the maturation of 16S rRNA. It has affinity for free ribosomal 30S subunits but not for 70S ribosomes. The protein is Ribosome maturation factor RimM of Geotalea daltonii (strain DSM 22248 / JCM 15807 / FRC-32) (Geobacter daltonii).